A 242-amino-acid chain; its full sequence is 3-deoxy-manno-octulosonate cytidylyltransferase (242 aa).

This sequence belongs to the KdsB family.

It localises to the cytoplasm. It carries out the reaction 3-deoxy-alpha-D-manno-oct-2-ulosonate + CTP = CMP-3-deoxy-beta-D-manno-octulosonate + diphosphate. It participates in nucleotide-sugar biosynthesis; CMP-3-deoxy-D-manno-octulosonate biosynthesis; CMP-3-deoxy-D-manno-octulosonate from 3-deoxy-D-manno-octulosonate and CTP: step 1/1. Its pathway is bacterial outer membrane biogenesis; lipopolysaccharide biosynthesis. Functionally, activates KDO (a required 8-carbon sugar) for incorporation into bacterial lipopolysaccharide in Gram-negative bacteria. The chain is 3-deoxy-manno-octulosonate cytidylyltransferase from Anaeromyxobacter dehalogenans (strain 2CP-C).